The primary structure comprises 99 residues: MMKMKINVDKSLIKAVKTGKVIVGANRTIDAAANGSAKMVVLASNCPEDIKKKIQATDIPVLEYEGTSVELGPVCGKPFTIAAMAILDVGESDILAATA.

Belongs to the eukaryotic ribosomal protein eL30 family.

The sequence is that of Large ribosomal subunit protein eL30 from Methanosarcina acetivorans (strain ATCC 35395 / DSM 2834 / JCM 12185 / C2A).